The primary structure comprises 667 residues: Mannosyl-oligosaccharide alpha-1,2-mannosidase IA (667 aa).

Residues 1 to 18 (MYRISPIGRKSNFHSREK) lie on the Cytoplasmic side of the membrane. The helical; Signal-anchor for type II membrane protein transmembrane segment at 19 to 39 (CLIGLVLVTLCFLCFGGIFLL) threads the bilayer. At 40 to 667 (PDNFGSDRVL…PVTLPVSNAS (628 aa)) the chain is on the lumenal side. Positions 154 to 192 (GDNAASQASSHPQSSAQQHNQQQPQLPLGGGGNDQAPDT) are disordered. Residues 156 to 178 (NAASQASSHPQSSAQQHNQQQPQ) are compositionally biased toward low complexity. N-linked (GlcNAc...) asparagine glycosylation is present at asparagine 278. A disulfide bridge connects residues cysteine 483 and cysteine 515. Glutamate 529 serves as the catalytic Proton donor. Ca(2+) is bound at residue threonine 640.

The protein belongs to the glycosyl hydrolase 47 family. It depends on Ca(2+) as a cofactor. Mg(2+) serves as cofactor. In terms of tissue distribution, complex spatial distribution during embryogenesis, including expression in lobula plate giant neurons. Also expressed in adult wing and eyes.

It localises to the golgi apparatus membrane. The enzyme catalyses N(4)-(alpha-D-Man-(1-&gt;2)-alpha-D-Man-(1-&gt;2)-alpha-D-Man-(1-&gt;3)-[alpha-D-Man-(1-&gt;2)-alpha-D-Man-(1-&gt;3)-[alpha-D-Man-(1-&gt;2)-alpha-D-Man-(1-&gt;6)]-alpha-D-Man-(1-&gt;6)]-beta-D-Man-(1-&gt;4)-beta-D-GlcNAc-(1-&gt;4)-beta-D-GlcNAc)-L-asparaginyl-[protein] (N-glucan mannose isomer 9A1,2,3B1,2,3) + 4 H2O = N(4)-(alpha-D-Man-(1-&gt;3)-[alpha-D-Man-(1-&gt;3)-[alpha-D-Man-(1-&gt;6)]-alpha-D-Man-(1-&gt;6)]-beta-D-Man-(1-&gt;4)-beta-D-GlcNAc-(1-&gt;4)-beta-D-GlcNAc)-L-asparaginyl-[protein] (N-glucan mannose isomer 5A1,2) + 4 beta-D-mannose. The catalysed reaction is N(4)-(alpha-D-Man-(1-&gt;2)-alpha-D-Man-(1-&gt;2)-alpha-D-Man-(1-&gt;3)-[alpha-D-Man-(1-&gt;3)-[alpha-D-Man-(1-&gt;2)-alpha-D-Man-(1-&gt;6)]-alpha-D-Man-(1-&gt;6)]-beta-D-Man-(1-&gt;4)-beta-D-GlcNAc-(1-&gt;4)-beta-D-GlcNAc)-L-asparaginyl-[protein] (N-glucan mannose isomer 8A1,2,3B1,3) + 3 H2O = N(4)-(alpha-D-Man-(1-&gt;3)-[alpha-D-Man-(1-&gt;3)-[alpha-D-Man-(1-&gt;6)]-alpha-D-Man-(1-&gt;6)]-beta-D-Man-(1-&gt;4)-beta-D-GlcNAc-(1-&gt;4)-beta-D-GlcNAc)-L-asparaginyl-[protein] (N-glucan mannose isomer 5A1,2) + 3 beta-D-mannose. The protein operates within protein modification; protein glycosylation. Its function is as follows. Involved in the maturation of Asn-linked oligosaccharides. Progressively trim alpha-1,2-linked mannose residues from Man(9)GlcNAc(2) to produce Man(5)GlcNAc(2). The protein is Mannosyl-oligosaccharide alpha-1,2-mannosidase IA of Drosophila melanogaster (Fruit fly).